A 492-amino-acid chain; its full sequence is Aspartyl/glutamyl-tRNA(Asn/Gln) amidotransferase subunit B (492 aa).

It belongs to the GatB/GatE family. GatB subfamily. As to quaternary structure, heterotrimer of A, B and C subunits.

It catalyses the reaction L-glutamyl-tRNA(Gln) + L-glutamine + ATP + H2O = L-glutaminyl-tRNA(Gln) + L-glutamate + ADP + phosphate + H(+). The enzyme catalyses L-aspartyl-tRNA(Asn) + L-glutamine + ATP + H2O = L-asparaginyl-tRNA(Asn) + L-glutamate + ADP + phosphate + 2 H(+). Functionally, allows the formation of correctly charged Asn-tRNA(Asn) or Gln-tRNA(Gln) through the transamidation of misacylated Asp-tRNA(Asn) or Glu-tRNA(Gln) in organisms which lack either or both of asparaginyl-tRNA or glutaminyl-tRNA synthetases. The reaction takes place in the presence of glutamine and ATP through an activated phospho-Asp-tRNA(Asn) or phospho-Glu-tRNA(Gln). This Prochlorococcus marinus (strain SARG / CCMP1375 / SS120) protein is Aspartyl/glutamyl-tRNA(Asn/Gln) amidotransferase subunit B.